The primary structure comprises 100 residues: Enhancer of yellow 2 transcription factor (100 aa).

Belongs to the ENY2 family. Component of the nuclear pore complex (NPC)-associated AMEX complex (anchoring and mRNA export complex), composed of at least e(y)2 and xmas-2. Component of the SAGA transcription coactivator-HAT complexes, at least composed of Ada2b, e(y)2, Pcaf/Gcn5, Taf10 and Nipped-A/Trrap. Within the SAGA complex, e(y)2, Sgf11, and not/nonstop form an additional subcomplex of SAGA called the DUB module (deubiquitination module). Component of the THO complex, composed of at least e(y)2, HPR1, THO2, THOC5, THOC6 and THOC7. Interacts with e(y)1. Interacts with su(Hw) (via zinc fingers). Interacts with xmas-2; required for localization to the nuclear periphery. Interacts with the nuclear pore complex (NPC).

It is found in the nucleus. The protein resides in the nucleoplasm. The protein localises to the cytoplasm. Functionally, involved in mRNA export coupled transcription activation by association with both the AMEX and the SAGA complexes. The SAGA complex is a multiprotein complex that activates transcription by remodeling chromatin and mediating histone acetylation and deubiquitination. Within the SAGA complex, participates in a subcomplex that specifically deubiquitinates histone H2B. The SAGA complex is recruited to specific gene promoters by activators, where it is required for transcription. Required for nuclear receptor-mediated transactivation. Involved in transcription elongation by recruiting the THO complex onto nascent mRNA. The AMEX complex functions in docking export-competent ribonucleoprotein particles (mRNPs) to the nuclear entrance of the nuclear pore complex (nuclear basket). AMEX participates in mRNA export and accurate chromatin positioning in the nucleus by tethering genes to the nuclear periphery. The protein is Enhancer of yellow 2 transcription factor of Drosophila persimilis (Fruit fly).